The primary structure comprises 1164 residues: DNA-directed RNA polymerase subunit beta (1164 aa).

Belongs to the RNA polymerase beta chain family. In terms of assembly, the RNAP catalytic core consists of 2 alpha, 1 beta, 1 beta' and 1 omega subunit. When a sigma factor is associated with the core the holoenzyme is formed, which can initiate transcription.

It catalyses the reaction RNA(n) + a ribonucleoside 5'-triphosphate = RNA(n+1) + diphosphate. In terms of biological role, DNA-dependent RNA polymerase catalyzes the transcription of DNA into RNA using the four ribonucleoside triphosphates as substrates. This chain is DNA-directed RNA polymerase subunit beta, found in Saccharopolyspora erythraea (strain ATCC 11635 / DSM 40517 / JCM 4748 / NBRC 13426 / NCIMB 8594 / NRRL 2338).